The sequence spans 353 residues: UPF0283 membrane protein YcjF (353 aa).

Residues 1-19 (MSEPLKPRIDFAEPLKEEP) show a composition bias toward basic and acidic residues. The disordered stretch occupies residues 1–35 (MSEPLKPRIDFAEPLKEEPTSAFKAQQTFSEAESR). The next 3 helical transmembrane spans lie at 70-90 (MVMG…VQWT), 100-120 (VALG…GSVV), and 213-233 (ESTL…FIAW).

This sequence belongs to the UPF0283 family.

It is found in the cell inner membrane. The polypeptide is UPF0283 membrane protein YcjF (Salmonella enteritidis PT4 (strain P125109)).